Reading from the N-terminus, the 131-residue chain is Small ribosomal subunit protein uS8 (131 aa).

The protein belongs to the universal ribosomal protein uS8 family. Part of the 30S ribosomal subunit. Contacts proteins S5 and S12.

In terms of biological role, one of the primary rRNA binding proteins, it binds directly to 16S rRNA central domain where it helps coordinate assembly of the platform of the 30S subunit. The sequence is that of Small ribosomal subunit protein uS8 from Hamiltonella defensa subsp. Acyrthosiphon pisum (strain 5AT).